Consider the following 146-residue polypeptide: Single-stranded DNA-binding protein 1-A, mitochondrial (146 aa).

Residues 1–17 (MFHRPALQVFRQFARCQ) constitute a mitochondrion transit peptide. The SSB domain occupies 28–140 (INKVQLLGRV…IIADNIIFLS (113 aa)).

Homotetramer.

Its subcellular location is the mitochondrion. The protein resides in the mitochondrion matrix. The protein localises to the mitochondrion nucleoid. Its function is as follows. Binds preferentially and cooperatively to pyrimidine rich single-stranded DNA (ss-DNA). Required to maintain the copy number of mitochondrial DNA (mtDNA) and plays crucial roles during mtDNA replication that stimulate activity of the DNA polymerase at the replication fork. May also function in mtDNA repair. The chain is Single-stranded DNA-binding protein 1-A, mitochondrial (ssbp1-a) from Xenopus laevis (African clawed frog).